Consider the following 872-residue polypeptide: DNA mismatch repair protein MutS (872 aa).

A compositionally biased stretch (polar residues) spans 1–17 (MSISKIESVNAEKQSPV). The tract at residues 1–22 (MSISKIESVNAEKQSPVGTEIG) is disordered. Position 632–639 (632–639 (GPNMGGKS)) interacts with ATP.

It belongs to the DNA mismatch repair MutS family.

Functionally, this protein is involved in the repair of mismatches in DNA. It is possible that it carries out the mismatch recognition step. This protein has a weak ATPase activity. The protein is DNA mismatch repair protein MutS of Azoarcus sp. (strain BH72).